The primary structure comprises 440 residues: Glutamate-1-semialdehyde 2,1-aminomutase (440 aa).

Lysine 271 is modified (N6-(pyridoxal phosphate)lysine).

It belongs to the class-III pyridoxal-phosphate-dependent aminotransferase family. HemL subfamily. Homodimer. Requires pyridoxal 5'-phosphate as cofactor.

The protein localises to the cytoplasm. It catalyses the reaction (S)-4-amino-5-oxopentanoate = 5-aminolevulinate. Its pathway is porphyrin-containing compound metabolism; protoporphyrin-IX biosynthesis; 5-aminolevulinate from L-glutamyl-tRNA(Glu): step 2/2. The protein is Glutamate-1-semialdehyde 2,1-aminomutase of Chlamydia pneumoniae (Chlamydophila pneumoniae).